The primary structure comprises 106 residues: CRISPR-associated endoribonuclease Cas2 (106 aa).

Asp8 contributes to the Mg(2+) binding site. Residues 86 to 106 are disordered; it reads EEAAEAAVSYPGRSRKKARAG.

Belongs to the CRISPR-associated endoribonuclease Cas2 protein family. In terms of assembly, homodimer, forms a heterotetramer with a Cas1 homodimer. Requires Mg(2+) as cofactor.

In terms of biological role, CRISPR (clustered regularly interspaced short palindromic repeat), is an adaptive immune system that provides protection against mobile genetic elements (viruses, transposable elements and conjugative plasmids). CRISPR clusters contain sequences complementary to antecedent mobile elements and target invading nucleic acids. CRISPR clusters are transcribed and processed into CRISPR RNA (crRNA). Functions as a ssRNA-specific endoribonuclease. Involved in the integration of spacer DNA into the CRISPR cassette. The polypeptide is CRISPR-associated endoribonuclease Cas2 (Desulforudis audaxviator (strain MP104C)).